The primary structure comprises 237 residues: LexA repressor (237 aa).

The H-T-H motif DNA-binding region spans 26–46 (FDEMKDALDLRSKSGIHRLIT). Active-site for autocatalytic cleavage activity residues include S158 and K196.

The protein belongs to the peptidase S24 family. Homodimer.

The catalysed reaction is Hydrolysis of Ala-|-Gly bond in repressor LexA.. Its function is as follows. Represses a number of genes involved in the response to DNA damage (SOS response), including recA and lexA. In the presence of single-stranded DNA, RecA interacts with LexA causing an autocatalytic cleavage which disrupts the DNA-binding part of LexA, leading to derepression of the SOS regulon and eventually DNA repair. The chain is LexA repressor from Rhodopseudomonas palustris (strain BisA53).